The sequence spans 1062 residues: Protein P1-P2 (1062 aa).

The N-terminal stretch at Met1–Ala20 is a signal peptide. 3 helical membrane-spanning segments follow: residues Ala121–Ala141, Ile144–Ile164, and Ala172–Trp192. Residues Val207–Glu399 enclose the Peptidase S39 domain. Active-site for protease activity residues include His255, Asp286, and Ser354. Positions Ala455–Arg560 are disordered. A compositionally biased stretch (polar residues) spans Thr463–Thr484. Residues Gln497–Arg511 show a composition bias toward basic residues. The span at Gln551–Arg560 shows a compositional bias: basic and acidic residues. In terms of domain architecture, RdRp catalytic spans Glu859 to Lys974.

In terms of processing, specific enzymatic cleavages in vivo yield mature proteins. The protease probably cleaves itself and releases the RdRp (Potential). Cleavages have been shown in the P1 protein, but since the N-terminus containing the serine protease is shared between P1 and P1-P2, cleavages should also occur within the P1-P2 protein.

The protein resides in the membrane. The enzyme catalyses RNA(n) + a ribonucleoside 5'-triphosphate = RNA(n+1) + diphosphate. Its function is as follows. Precursor from which the RNA-dependent RNA polymerase (RdRp) is probably released. RNA-dependent RNA polymerase plays an essential role in virus replication (Potential). The protein is Protein P1-P2 of Potato leafroll virus (strain Potato/Scotland/strain 1/1984) (PLrV).